The sequence spans 156 residues: Ribosomal RNA large subunit methyltransferase H (156 aa).

S-adenosyl-L-methionine contacts are provided by residues Leu73, Gly104, and 123–128 (VSSLTL).

Belongs to the RNA methyltransferase RlmH family. As to quaternary structure, homodimer.

The protein localises to the cytoplasm. It catalyses the reaction pseudouridine(1915) in 23S rRNA + S-adenosyl-L-methionine = N(3)-methylpseudouridine(1915) in 23S rRNA + S-adenosyl-L-homocysteine + H(+). Functionally, specifically methylates the pseudouridine at position 1915 (m3Psi1915) in 23S rRNA. In Paraburkholderia phymatum (strain DSM 17167 / CIP 108236 / LMG 21445 / STM815) (Burkholderia phymatum), this protein is Ribosomal RNA large subunit methyltransferase H.